Consider the following 649-residue polypeptide: Acetylcholinesterase (649 aa).

Positions 1–38 (MAISCRQSRVLPMSLPLPLTIPLPLVLVLSLHLSGVCG) are cleaved as a signal peptide. C104 and C131 are joined by a disulfide. N-linked (GlcNAc...) asparagine glycans are attached at residues N126 and N174. The Acyl-ester intermediate role is filled by S276. C330 and C345 are oxidised to a cystine. N331 is a glycosylation site (N-linked (GlcNAc...) asparagine). Active-site charge relay system residues include E405 and H518. A disulfide bond links C480 and C598. N-linked (GlcNAc...) asparagine glycosylation is present at N531. S619 is lipidated: GPI-anchor amidated serine. Residues 620 to 649 (GSASISPRLQLLGIAALIYICAALRTKRVF) constitute a propeptide, removed in mature form.

This sequence belongs to the type-B carboxylesterase/lipase family. In terms of assembly, homodimer; disulfide-linked. The active unit is formed by non-covalent association of the 55 kDa and 16 kDa subunits. In terms of processing, proteolytic cleavage into the 16 kDa subunit and the 55 kDa subunits originates from the hydrophilic peptide, aa 148-180, and is associated with excretion out of the cell. Post-translationally, neither N-glycosylation nor dimerization is required for enzyme activity or substrate specificity, but protects the protein against proteolytic digestion.

It is found in the synapse. The protein localises to the cell membrane. The enzyme catalyses acetylcholine + H2O = choline + acetate + H(+). Rapidly hydrolyzes choline released into the synapse. It can hydrolyze butyrylthiocholine. The protein is Acetylcholinesterase (Ace) of Drosophila melanogaster (Fruit fly).